Here is a 391-residue protein sequence, read N- to C-terminus: Chalcone synthase (391 aa).

The active site involves Cys164.

The protein belongs to the thiolase-like superfamily. Chalcone/stilbene synthases family.

It catalyses the reaction (E)-4-coumaroyl-CoA + 3 malonyl-CoA + 3 H(+) = 2',4,4',6'-tetrahydroxychalcone + 3 CO2 + 4 CoA. Its pathway is secondary metabolite biosynthesis; flavonoid biosynthesis. Its function is as follows. The primary product of this enzyme is 4,2',4',6'-tetrahydroxychalcone (also termed naringenin-chalcone or chalcone) which can under specific conditions spontaneously isomerize into naringenin. This is Chalcone synthase (CHS) from Dianthus caryophyllus (Carnation).